The following is a 377-amino-acid chain: 4-hydroxy-3-methylbut-2-en-1-yl diphosphate synthase (flavodoxin) (377 aa).

Residues C270, C273, C305, and E312 each contribute to the [4Fe-4S] cluster site.

This sequence belongs to the IspG family. [4Fe-4S] cluster serves as cofactor.

The catalysed reaction is (2E)-4-hydroxy-3-methylbut-2-enyl diphosphate + oxidized [flavodoxin] + H2O + 2 H(+) = 2-C-methyl-D-erythritol 2,4-cyclic diphosphate + reduced [flavodoxin]. Its pathway is isoprenoid biosynthesis; isopentenyl diphosphate biosynthesis via DXP pathway; isopentenyl diphosphate from 1-deoxy-D-xylulose 5-phosphate: step 5/6. Converts 2C-methyl-D-erythritol 2,4-cyclodiphosphate (ME-2,4cPP) into 1-hydroxy-2-methyl-2-(E)-butenyl 4-diphosphate. This Bacillus subtilis (strain 168) protein is 4-hydroxy-3-methylbut-2-en-1-yl diphosphate synthase (flavodoxin).